A 247-amino-acid polypeptide reads, in one-letter code: V-type proton ATPase subunit D (247 aa).

It belongs to the V-ATPase D subunit family. V-ATPase is a heteromultimeric enzyme made up of two complexes: the ATP-hydrolytic V1 complex and the proton translocation V0 complex. The V1 complex consists of three catalytic AB heterodimers that form a heterohexamer, three peripheral stalks each consisting of EG heterodimers, one central rotor including subunits D and F, and the regulatory subunits C and H. The proton translocation complex V0 consists of the proton transport subunit a, a ring of proteolipid subunits c9c'', rotary subunit d, subunits e and f, and the accessory subunits ATP6AP1/Ac45 and ATP6AP2/PRR. Interacts with SNX10.

The protein resides in the membrane. Its subcellular location is the cytoplasmic vesicle. It localises to the clathrin-coated vesicle membrane. The protein localises to the cytoplasm. It is found in the cytoskeleton. The protein resides in the microtubule organizing center. Its subcellular location is the centrosome. It localises to the cell projection. The protein localises to the cilium. Functionally, subunit of the V1 complex of vacuolar(H+)-ATPase (V-ATPase), a multisubunit enzyme composed of a peripheral complex (V1) that hydrolyzes ATP and a membrane integral complex (V0) that translocates protons. V-ATPase is responsible for acidifying and maintaining the pH of intracellular compartments and in some cell types, is targeted to the plasma membrane, where it is responsible for acidifying the extracellular environment. May play a role in cilium biogenesis through regulation of the transport and the localization of proteins to the cilium. The sequence is that of V-type proton ATPase subunit D (ATP6V1D) from Homo sapiens (Human).